A 577-amino-acid chain; its full sequence is Proline--tRNA ligase (577 aa).

Belongs to the class-II aminoacyl-tRNA synthetase family. ProS type 1 subfamily. Homodimer.

It localises to the cytoplasm. The enzyme catalyses tRNA(Pro) + L-proline + ATP = L-prolyl-tRNA(Pro) + AMP + diphosphate. Functionally, catalyzes the attachment of proline to tRNA(Pro) in a two-step reaction: proline is first activated by ATP to form Pro-AMP and then transferred to the acceptor end of tRNA(Pro). As ProRS can inadvertently accommodate and process non-cognate amino acids such as alanine and cysteine, to avoid such errors it has two additional distinct editing activities against alanine. One activity is designated as 'pretransfer' editing and involves the tRNA(Pro)-independent hydrolysis of activated Ala-AMP. The other activity is designated 'posttransfer' editing and involves deacylation of mischarged Ala-tRNA(Pro). The misacylated Cys-tRNA(Pro) is not edited by ProRS. The chain is Proline--tRNA ligase from Chlamydia felis (strain Fe/C-56) (Chlamydophila felis).